Reading from the N-terminus, the 340-residue chain is NADH-quinone oxidoreductase subunit H (340 aa).

The next 8 helical transmembrane spans lie at 4-24 (TIGILIWIIIKIIVIVVPLLI), 78-98 (YLFVIAPLFALVPSLVGWAVI), 113-133 (VLYLFAMSSLGVYGVLIAGWA), 151-171 (VSYEIAMGFALVGVLLAAGSM), 184-204 (MLHWWFIPLLPLFLVFWISGI), 244-264 (SMILISTVLAILFMGGWLSPF), 273-293 (IFFIVPGFVWLLLKISFFLFV), and 316-336 (VLIPVTIVWLIVTAVMVVAHV).

The protein belongs to the complex I subunit 1 family. As to quaternary structure, NDH-1 is composed of 14 different subunits. Subunits NuoA, H, J, K, L, M, N constitute the membrane sector of the complex.

The protein localises to the cell inner membrane. It catalyses the reaction a quinone + NADH + 5 H(+)(in) = a quinol + NAD(+) + 4 H(+)(out). Its function is as follows. NDH-1 shuttles electrons from NADH, via FMN and iron-sulfur (Fe-S) centers, to quinones in the respiratory chain. The immediate electron acceptor for the enzyme in this species is believed to be ubiquinone. Couples the redox reaction to proton translocation (for every two electrons transferred, four hydrogen ions are translocated across the cytoplasmic membrane), and thus conserves the redox energy in a proton gradient. This subunit may bind ubiquinone. The chain is NADH-quinone oxidoreductase subunit H from Legionella pneumophila (strain Lens).